A 434-amino-acid polypeptide reads, in one-letter code: Na(+)/H(+) antiporter NhaA 1 (434 aa).

10 helical membrane passes run 30–50 (TGGL…NVAG), 70–90 (LSIE…VTGL), 108–128 (ALPI…FVLV), 141–161 (VGWA…LAVV), 172–192 (FLLT…AIFY), 195–215 (QVHW…TVAV), 286–306 (FAVP…VSGF), 318–338 (VIAG…WLLA), 354–374 (VLGM…IGSL), and 386–406 (VTLG…VVLS).

The protein belongs to the NhaA Na(+)/H(+) (TC 2.A.33) antiporter family.

Its subcellular location is the cell membrane. It carries out the reaction Na(+)(in) + 2 H(+)(out) = Na(+)(out) + 2 H(+)(in). Its function is as follows. Na(+)/H(+) antiporter that extrudes sodium in exchange for external protons. The polypeptide is Na(+)/H(+) antiporter NhaA 1 (Kineococcus radiotolerans (strain ATCC BAA-149 / DSM 14245 / SRS30216)).